Consider the following 430-residue polypeptide: Enolase (430 aa).

(2R)-2-phosphoglycerate is bound at residue Gln-164. Glu-208 (proton donor) is an active-site residue. Mg(2+) is bound by residues Asp-245, Glu-288, and Asp-315. Residues Lys-340, Arg-369, Ser-370, and Lys-391 each contribute to the (2R)-2-phosphoglycerate site. Lys-340 serves as the catalytic Proton acceptor.

It belongs to the enolase family. Mg(2+) serves as cofactor.

Its subcellular location is the cytoplasm. The protein resides in the secreted. It localises to the cell surface. It catalyses the reaction (2R)-2-phosphoglycerate = phosphoenolpyruvate + H2O. Its pathway is carbohydrate degradation; glycolysis; pyruvate from D-glyceraldehyde 3-phosphate: step 4/5. In terms of biological role, catalyzes the reversible conversion of 2-phosphoglycerate (2-PG) into phosphoenolpyruvate (PEP). It is essential for the degradation of carbohydrates via glycolysis. The sequence is that of Enolase from Thermococcus kodakarensis (strain ATCC BAA-918 / JCM 12380 / KOD1) (Pyrococcus kodakaraensis (strain KOD1)).